Consider the following 215-residue polypeptide: Protein GET1 (215 aa).

Over 1–4 (MPSL) the chain is Lumenal. A helical membrane pass occupies residues 5 to 24 (LILIFTIEVAVELINTIGAA). At 25–110 (TINNLLWRIF…NFDKYITGIR (86 aa)) the chain is on the cytoplasmic side. Positions 72–104 (AKWAKLRRQHDKLLEQLEKKKAALDSTKGNFDK) form a coiled coil. The helical transmembrane segment at 111–131 (WVGTQGLRYFLPFWYAKVPMF) threads the bilayer. At 132–155 (WLPYGWFPYYAEWLVSFPRAPMGS) the chain is on the lumenal side. Residues 156–172 (VSIASWQLACTGFVVLI) traverse the membrane as a helical segment. Residues 173 to 215 (KDAITALVVFVMGMRQSNVKQAVPVKAVSGEKASDEKEGKKEL) lie on the Cytoplasmic side of the membrane.

It belongs to the WRB/GET1 family. In terms of assembly, interacts with GET3.

The protein resides in the endoplasmic reticulum membrane. In terms of biological role, required for the post-translational delivery of tail-anchored (TA) proteins to the endoplasmic reticulum. Acts as a membrane receptor for soluble GET3, which recognizes and selectively binds the transmembrane domain of TA proteins in the cytosol. This is Protein GET1 from Pyricularia oryzae (strain 70-15 / ATCC MYA-4617 / FGSC 8958) (Rice blast fungus).